We begin with the raw amino-acid sequence, 416 residues long: 2-aminoadipate transaminase (416 aa).

Residues 102-103 and Gln-233 contribute to the pyridoxal 5'-phosphate site; that span reads GA. N6-(pyridoxal phosphate)lysine is present on Lys-259. Residue Thr-288 coordinates pyridoxal 5'-phosphate.

This sequence belongs to the class-III pyridoxal-phosphate-dependent aminotransferase family. Pyridoxal 5'-phosphate is required as a cofactor.

The enzyme catalyses L-2-aminoadipate + 2-oxoglutarate = 2-oxoadipate + L-glutamate. The catalysed reaction is 5-aminopentanoate + 2-oxoglutarate = 5-oxopentanoate + L-glutamate. The protein operates within amino-acid degradation. In terms of biological role, catalyzes the conversion of 2-aminoadipate (2AA) to 2-oxoadipate (2OA). Is most active on L-2-aminoadipate (L-2AA) and shows only weak activity on the enantiomer, D-2-aminoadipate (D-2AA). Shows moderate activity on 5-aminovalerate (5AVA) and weak activity toward 4-aminobutyrate (GABA). Is involved in a D-lysine catabolic pathway. This chain is 2-aminoadipate transaminase, found in Pseudomonas putida (strain ATCC 47054 / DSM 6125 / CFBP 8728 / NCIMB 11950 / KT2440).